The chain runs to 155 residues: Large ribosomal subunit protein uL16 (155 aa).

Residues 1–22 form a disordered region; the sequence is MLSPKRTKYRKQQRGRMKGKAT.

It belongs to the universal ribosomal protein uL16 family. Part of the 50S ribosomal subunit.

In terms of biological role, binds 23S rRNA and is also seen to make contacts with the A and possibly P site tRNAs. This chain is Large ribosomal subunit protein uL16, found in Synechococcus sp. (strain JA-2-3B'a(2-13)) (Cyanobacteria bacterium Yellowstone B-Prime).